The chain runs to 145 residues: Plastocyanin, chloroplastic (145 aa).

Residues 1-47 constitute a chloroplast transit peptide; sequence MKATLRAPASRASAVRPVASLKAAAQRVASVAGVSVASLALTLAAHA. The Plastocyanin-like domain maps to 48–145; sequence DATVKLGADS…AGMVGKIIVQ (98 aa). The Cu cation site is built by histidine 85, cysteine 130, histidine 133, and methionine 138.

This sequence belongs to the plastocyanin family. Cu(2+) is required as a cofactor.

The protein localises to the plastid. Its subcellular location is the chloroplast thylakoid membrane. Functionally, participates in electron transfer between P700 and the cytochrome b6-f complex in photosystem I. This is Plastocyanin, chloroplastic (PETE) from Chlamydomonas reinhardtii (Chlamydomonas smithii).